The sequence spans 1053 residues: Zinc finger and BTB domain-containing protein 11 (1053 aa).

A compositionally biased stretch (acidic residues) spans 141 to 156 (LDLESGEESNESEDDL). The segment at 141–173 (LDLESGEESNESEDDLSNFTSSPTTASKPAKKK) is disordered. Residues 157–168 (SNFTSSPTTASK) are compositionally biased toward low complexity. Positions 214-282 (CDVTLLIEGE…AYTSVLSFDF (69 aa)) constitute a BTB domain. Residues 546–566 (LVQRGKKMKQPKRDAKENTEE) form a disordered region. A compositionally biased stretch (basic and acidic residues) spans 556-566 (PKRDAKENTEE). C2H2-type zinc fingers lie at residues 569–591 (HKCGECGMVFQRRYALIMHKLKH) and 597–619 (YKCPLCKKQFQYSASLRAHLIRH). Residues 619–643 (HTRKDAPSSSSSNSTSNEASGTSSE) are disordered. The segment covering 626–642 (SSSSSNSTSNEASGTSS) has biased composition (low complexity). 10 consecutive C2H2-type zinc fingers follow at residues 651 to 673 (FICSICGRTLPKLYSLRIHMLKH), 679 to 701 (HACQVCGKTFIYKHGLKLHQSLH), 707 to 729 (FQCELCVKSFVTKRSLQEHMSIH), 735 to 757 (YLCSVCGKSFHRGSGLSKHFKKH), 766 to 788 (YHCTQCEKSFFEARDLRQHMNKH), 794 to 816 (FQCQFCDKCYSWKKDWYSHVKSH), 822 to 846 (YRCNICGKEFYEKALFRRHVKKATH), 858 to 880 (RVCEKCGRKFTQLREYRRHMNNH), 886 to 908 (FECLTCGVAWADARSLKRHVRTH), and 914 to 937 (YVCPVCSEAYIDARTLRKHMTKFH). A Glycyl lysine isopeptide (Lys-Gly) (interchain with G-Cter in SUMO2) cross-link involves residue Lys-1043. Position 1050 is a phosphoserine (Ser-1050).

It localises to the nucleus. The protein resides in the nucleolus. In terms of biological role, may be involved in transcriptional regulation. This chain is Zinc finger and BTB domain-containing protein 11, found in Homo sapiens (Human).